Here is a 164-residue protein sequence, read N- to C-terminus: UPF0114 protein Sbal223_3668 (164 aa).

4 helical membrane-spanning segments follow: residues 15–35 (IMAP…IKFF), 53–73 (LVLV…IVMV), 108–128 (KVAA…FMDV), and 136–156 (IMWY…MGYL).

Belongs to the UPF0114 family.

The protein resides in the cell membrane. The protein is UPF0114 protein Sbal223_3668 of Shewanella baltica (strain OS223).